A 430-amino-acid chain; its full sequence is Argininosuccinate lyase (430 aa).

This sequence belongs to the lyase 1 family. Argininosuccinate lyase subfamily.

It is found in the cytoplasm. The catalysed reaction is 2-(N(omega)-L-arginino)succinate = fumarate + L-arginine. Its pathway is amino-acid biosynthesis; L-arginine biosynthesis; L-arginine from L-ornithine and carbamoyl phosphate: step 3/3. In Sorangium cellulosum (strain So ce56) (Polyangium cellulosum (strain So ce56)), this protein is Argininosuccinate lyase.